The chain runs to 425 residues: Serine--tRNA ligase (425 aa).

Threonine 230–glutamate 232 is a binding site for L-serine. Arginine 261–glutamate 263 contributes to the ATP binding site. An L-serine-binding site is contributed by glutamate 284. Glutamate 348 to serine 351 contributes to the ATP binding site. Position 384 (serine 384) interacts with L-serine.

This sequence belongs to the class-II aminoacyl-tRNA synthetase family. Type-1 seryl-tRNA synthetase subfamily. Homodimer. The tRNA molecule binds across the dimer.

It localises to the cytoplasm. The enzyme catalyses tRNA(Ser) + L-serine + ATP = L-seryl-tRNA(Ser) + AMP + diphosphate + H(+). It catalyses the reaction tRNA(Sec) + L-serine + ATP = L-seryl-tRNA(Sec) + AMP + diphosphate + H(+). Its pathway is aminoacyl-tRNA biosynthesis; selenocysteinyl-tRNA(Sec) biosynthesis; L-seryl-tRNA(Sec) from L-serine and tRNA(Sec): step 1/1. In terms of biological role, catalyzes the attachment of serine to tRNA(Ser). Is also able to aminoacylate tRNA(Sec) with serine, to form the misacylated tRNA L-seryl-tRNA(Sec), which will be further converted into selenocysteinyl-tRNA(Sec). In Streptococcus pyogenes serotype M1, this protein is Serine--tRNA ligase.